The sequence spans 730 residues: ABC transporter G family member 20 (730 aa).

The ABC transporter domain maps to 15–244 (ISLKNVCRGY…YESQTLEEVF (230 aa)). Position 47 to 54 (47 to 54 (GASGSGKT)) interacts with ATP. The interval 281–303 (VNNNNNNNNNNNNNNYNNNDDEE) is disordered. A compositionally biased stretch (low complexity) spans 282–298 (NNNNNNNNNNNNNNYNN). The ABC transmembrane type-2 domain maps to 489 to 717 (SFETLAKQQA…FIAVLALNEK (229 aa)). A run of 5 helical transmembrane segments spans residues 520–540 (FIDF…AISI), 572–592 (FLGH…IAIY), 602–622 (IALV…LGLV), 634–654 (IQLS…LWPL), and 692–712 (VWVA…IAVL).

The protein belongs to the ABC transporter superfamily.

It is found in the membrane. This is ABC transporter G family member 20 (abcG20) from Dictyostelium discoideum (Social amoeba).